The following is a 423-amino-acid chain: Enolase (423 aa).

Residue Q162 participates in (2R)-2-phosphoglycerate binding. The active-site Proton donor is E204. Residues D241, E284, and D311 each contribute to the Mg(2+) site. (2R)-2-phosphoglycerate contacts are provided by K336, R365, S366, and K387. The active-site Proton acceptor is the K336.

This sequence belongs to the enolase family. Mg(2+) is required as a cofactor.

The protein resides in the cytoplasm. It localises to the secreted. The protein localises to the cell surface. The enzyme catalyses (2R)-2-phosphoglycerate = phosphoenolpyruvate + H2O. It participates in carbohydrate degradation; glycolysis; pyruvate from D-glyceraldehyde 3-phosphate: step 4/5. In terms of biological role, catalyzes the reversible conversion of 2-phosphoglycerate (2-PG) into phosphoenolpyruvate (PEP). It is essential for the degradation of carbohydrates via glycolysis. This Bartonella bacilliformis (strain ATCC 35685 / KC583 / Herrer 020/F12,63) protein is Enolase.